The chain runs to 559 residues: DNA primase (559 aa).

A CHC2-type zinc finger spans residues 37 to 61; that stretch reads CPFHEERSASFSVNQVKGFYYCFGC. The Toprim domain maps to 246–327; it reads KQVIVTEGYL…KGGVILFENN (82 aa). Positions 252, 296, and 298 each coordinate Mg(2+).

The protein belongs to the DnaG primase family. Monomer. Interacts with DnaB. It depends on Zn(2+) as a cofactor. Mg(2+) is required as a cofactor.

It carries out the reaction ssDNA + n NTP = ssDNA/pppN(pN)n-1 hybrid + (n-1) diphosphate.. In terms of biological role, RNA polymerase that catalyzes the synthesis of short RNA molecules used as primers for DNA polymerase during DNA replication. In Helicobacter pylori (strain J99 / ATCC 700824) (Campylobacter pylori J99), this protein is DNA primase.